The chain runs to 818 residues: Piwi-like protein (818 aa).

Positions 220–339 (RINRVLNDNS…ITGELCFLCG (120 aa)) constitute a PAZ domain. The Piwi domain occupies 501-800 (KIALVFVPDD…LAELIGKVHK (300 aa)).

The protein belongs to the argonaute family. Piwi subfamily.

This is Piwi-like protein (iwi) from Dugesia japonica (Planarian).